A 396-amino-acid chain; its full sequence is uncharacterized protein (396 aa).

11 consecutive transmembrane segments (helical) span residues S7–L27, A36–L56, V62–I82, L94–F114, V159–L179, I218–Y238, G250–F270, T285–V305, L310–G330, I340–A360, and V367–F387.

The protein localises to the cell membrane. This is an uncharacterized protein from Bacillus subtilis (strain 168).